We begin with the raw amino-acid sequence, 736 residues long: Catalase-peroxidase (736 aa).

The tract at residues 1–30 (MGGNVMTDDKMNSVTSGANKQETGRDMSNR) is disordered. A compositionally biased stretch (polar residues) spans 12–21 (NSVTSGANKQ). A cross-link (tryptophyl-tyrosyl-methioninium (Trp-Tyr) (with M-250)) is located at residues 101-224 (WHSAGTYRAG…LAAVQMGLIY (124 aa)). Residue His-102 is the Proton acceptor of the active site. Positions 224–250 (YVNPEGPNGNPDPIAAAKDIREVFARM) form a cross-link, tryptophyl-tyrosyl-methioninium (Tyr-Met) (with W-101). Residue His-265 coordinates heme b. Residues 351 to 373 (KGGAGAGTIPDAHDPSKRHAPSM) are disordered.

It belongs to the peroxidase family. Peroxidase/catalase subfamily. Homodimer or homotetramer. Heme b is required as a cofactor. Post-translationally, formation of the three residue Trp-Tyr-Met cross-link is important for the catalase, but not the peroxidase activity of the enzyme.

The catalysed reaction is H2O2 + AH2 = A + 2 H2O. It carries out the reaction 2 H2O2 = O2 + 2 H2O. Functionally, bifunctional enzyme with both catalase and broad-spectrum peroxidase activity. In Methanosarcina acetivorans (strain ATCC 35395 / DSM 2834 / JCM 12185 / C2A), this protein is Catalase-peroxidase.